The chain runs to 255 residues: Large ribosomal subunit protein uL4 (255 aa).

The protein belongs to the universal ribosomal protein uL4 family. Part of the 50S ribosomal subunit.

Functionally, one of the primary rRNA binding proteins, this protein initially binds near the 5'-end of the 23S rRNA. It is important during the early stages of 50S assembly. It makes multiple contacts with different domains of the 23S rRNA in the assembled 50S subunit and ribosome. Its function is as follows. Forms part of the polypeptide exit tunnel. The polypeptide is Large ribosomal subunit protein uL4 (Pyrococcus abyssi (strain GE5 / Orsay)).